The following is a 296-amino-acid chain: 4-diphosphocytidyl-2-C-methyl-D-erythritol kinase (296 aa).

K22 is an active-site residue. An ATP-binding site is contributed by 105–115 (PMGGGLGGGSS). The active site involves D147.

This sequence belongs to the GHMP kinase family. IspE subfamily.

The catalysed reaction is 4-CDP-2-C-methyl-D-erythritol + ATP = 4-CDP-2-C-methyl-D-erythritol 2-phosphate + ADP + H(+). Its pathway is isoprenoid biosynthesis; isopentenyl diphosphate biosynthesis via DXP pathway; isopentenyl diphosphate from 1-deoxy-D-xylulose 5-phosphate: step 3/6. In terms of biological role, catalyzes the phosphorylation of the position 2 hydroxy group of 4-diphosphocytidyl-2C-methyl-D-erythritol. The sequence is that of 4-diphosphocytidyl-2-C-methyl-D-erythritol kinase from Photobacterium profundum (strain SS9).